The primary structure comprises 451 residues: Homeobox protein meis3-B (451 aa).

Positions 33–64 (HHSLSQSTPYGSTGAAHRVPMPPGMGSNDGLK) are disordered. Residues 34 to 43 (HSLSQSTPYG) are compositionally biased toward polar residues. Residues 102-185 (GGDVCSSDSF…PIDLVIDDRD (84 aa)) form the MEIS N-terminal domain. The tract at residues 206–272 (NNTWIRDHDE…RDKKRNKKRG (67 aa)) is disordered. Over residues 218-230 (STHSGTPGPSSGG) the composition is skewed to low complexity. Positions 231-242 (LASQSGDNSSEQ) are enriched in polar residues. The segment at residues 267–329 (RNKKRGIFPK…NARRRIVQPM (63 aa)) is a DNA-binding region (homeobox).

Belongs to the TALE/MEIS homeobox family.

It is found in the nucleus. In terms of biological role, a caudalizing protein which is required to pattern the anterior/posterior (A/P) axis during central nervous system (CNS) formation. Inhibits anterior neural expression and acts as a transcriptional activator to induce posterior neural gene expression. Maintains a proper A/P balance required for hindbrain formation by activating the FGF/MAPK pathway, which modulates the planar cell polarity (PCP) pathway. Interacts with retinoid signaling during hindbrain patterning. This chain is Homeobox protein meis3-B (meis3-b), found in Xenopus laevis (African clawed frog).